A 528-amino-acid polypeptide reads, in one-letter code: Tyrosine--tRNA ligase, cytoplasmic (528 aa).

Met1 carries the post-translational modification N-acetylmethionine. Gly2 is modified (N-acetylglycine; in Tyrosine--tRNA ligase, cytoplasmic, N-terminally processed). Tyr39 provides a ligand contact to L-tyrosine. Tyr39 lines the trans-resveratrol pocket. The 'HIGH' region signature appears at 44–52 (TTGKPHVAY). The L-tyrosine site is built by Tyr166, Gln170, Asp173, and Gln188. Positions 170 and 173 each coordinate trans-resveratrol. Residue Lys197 is modified to N6-acetyllysine. At Ser205 the chain carries Phosphoserine. At Lys206 the chain carries N6-acetyllysine. The 'KMSKS' region signature appears at 222–226 (KMSSS). The short motif at 242 to 247 (KKKLKK) is the Nuclear localization signal element. The interval 339–363 (AAYPDPSKQKPMAKGPAKNSEPEEV) is disordered. The tRNA-binding domain occupies 364–468 (IPSRLDIRVG…AGSAPGEHVF (105 aa)). The residue at position 386 (Ser386) is a Phosphoserine. Residues Lys474, Lys482, and Lys490 each carry the N6-acetyllysine modification.

This sequence belongs to the class-I aminoacyl-tRNA synthetase family. As to quaternary structure, homodimer. Interacts (when binding to resveratrol) with PARP1; interaction stimulates the poly-ADP-ribosyltransferase activity of PARP1.

It localises to the cytoplasm. Its subcellular location is the nucleus. It catalyses the reaction tRNA(Tyr) + L-tyrosine + ATP = L-tyrosyl-tRNA(Tyr) + AMP + diphosphate + H(+). With respect to regulation, resveratrol strongly inhibits the tyrosine--tRNA ligase activity. In terms of biological role, tyrosine--tRNA ligase that catalyzes the attachment of tyrosine to tRNA(Tyr) in a two-step reaction: tyrosine is first activated by ATP to form Tyr-AMP and then transferred to the acceptor end of tRNA(Tyr). Also acts as a positive regulator of poly-ADP-ribosylation in the nucleus, independently of its tyrosine--tRNA ligase activity. Activity is switched upon resveratrol-binding: resveratrol strongly inhibits the tyrosine--tRNA ligase activity and promotes relocalization to the nucleus, where YARS1 specifically stimulates the poly-ADP-ribosyltransferase activity of PARP1. This is Tyrosine--tRNA ligase, cytoplasmic from Homo sapiens (Human).